Reading from the N-terminus, the 87-residue chain is Small ribosomal subunit protein uS15c (87 aa).

The segment at 1–20 is disordered; sequence MNQNLSIRKRNKLKQDSGSP.

It belongs to the universal ribosomal protein uS15 family. Part of the 30S ribosomal subunit.

Its subcellular location is the plastid. It is found in the chloroplast. This is Small ribosomal subunit protein uS15c (rps15) from Zygnema circumcarinatum (Green alga).